The following is a 625-amino-acid chain: Probable potassium transport system protein Kup 2 (625 aa).

A run of 12 helical transmembrane segments spans residues leucine 15–phenylalanine 35, isoleucine 52–valine 72, glycine 98–leucine 118, leucine 134–phenylalanine 154, isoleucine 164–phenylalanine 184, phenylalanine 212–alanine 232, tryptophan 246–leucine 266, phenylalanine 284–isoleucine 304, valine 336–phenylalanine 356, alanine 365–alanine 385, phenylalanine 394–isoleucine 414, and leucine 417–threonine 437.

This sequence belongs to the HAK/KUP transporter (TC 2.A.72) family.

It is found in the cell inner membrane. The enzyme catalyses K(+)(in) + H(+)(in) = K(+)(out) + H(+)(out). Functionally, transport of potassium into the cell. Likely operates as a K(+):H(+) symporter. The sequence is that of Probable potassium transport system protein Kup 2 from Legionella pneumophila (strain Paris).